Reading from the N-terminus, the 634-residue chain is Chaperone protein HtpG (634 aa).

The tract at residues 1-344 is a; substrate-binding; sequence MSETVSHNKE…SNDLPLNVSR (344 aa). Positions 345 to 561 are b; it reads EILQDNKVTQ…DFEMGTQMAK (217 aa). The segment at 562–634 is c; sequence LLEAAGQAVP…GAINKLLTKV (73 aa).

Belongs to the heat shock protein 90 family. Homodimer.

Its subcellular location is the cytoplasm. In terms of biological role, molecular chaperone. Has ATPase activity. The polypeptide is Chaperone protein HtpG (Vibrio campbellii (strain ATCC BAA-1116)).